The primary structure comprises 520 residues: Aldehyde dehydrogenase 5, mitochondrial (520 aa).

A mitochondrion-targeting transit peptide spans 1-23 (MLSRTRAAAPNSRIFTRSLLRLY). Position 266–271 (266–271 (GSTATG)) interacts with NAD(+). Catalysis depends on Glu-288, which acts as the Proton acceptor. Cys-322 functions as the Nucleophile in the catalytic mechanism.

Belongs to the aldehyde dehydrogenase family.

The protein resides in the mitochondrion matrix. It catalyses the reaction an aldehyde + NADP(+) + H2O = a carboxylate + NADPH + 2 H(+). The catalysed reaction is an aldehyde + NAD(+) + H2O = a carboxylate + NADH + 2 H(+). The protein operates within alcohol metabolism; ethanol degradation; acetate from ethanol: step 2/2. Induced by potassium ions. Minor mitochondrial aldehyde dehydrogenase isoform. Plays a role in regulation or biosynthesis of electron transport chain components. Involved in the biosynthesis of acetate during anaerobic growth on glucose. In Saccharomyces cerevisiae (strain YJM789) (Baker's yeast), this protein is Aldehyde dehydrogenase 5, mitochondrial (ALD5).